We begin with the raw amino-acid sequence, 151 residues long: Probable transport accessory protein MmpS1 (151 aa).

The next 2 helical transmembrane spans lie at 8–28 and 81–101; these read FWIP…VSRL and VVNA…AVVA.

The protein belongs to the MmpS family.

It localises to the cell membrane. The polypeptide is Probable transport accessory protein MmpS1 (mmpS1) (Mycobacterium tuberculosis (strain CDC 1551 / Oshkosh)).